We begin with the raw amino-acid sequence, 346 residues long: Fe(3+) ions import ATP-binding protein FbpC 2 (346 aa).

In terms of domain architecture, ABC transporter spans 2 to 234 (LELHRVSKSF…PNSEDIATFL (233 aa)). Residue 34–41 (GPSGSGKT) participates in ATP binding.

It belongs to the ABC transporter superfamily. Fe(3+) ion importer (TC 3.A.1.10) family. As to quaternary structure, the complex is composed of two ATP-binding proteins (FbpC), two transmembrane proteins (FbpB) and a solute-binding protein (FbpA).

Its subcellular location is the cell inner membrane. The enzyme catalyses Fe(3+)(out) + ATP + H2O = Fe(3+)(in) + ADP + phosphate + H(+). In terms of biological role, part of the ABC transporter complex FbpABC involved in Fe(3+) ions import. Responsible for energy coupling to the transport system. This chain is Fe(3+) ions import ATP-binding protein FbpC 2, found in Pectobacterium atrosepticum (strain SCRI 1043 / ATCC BAA-672) (Erwinia carotovora subsp. atroseptica).